A 540-amino-acid polypeptide reads, in one-letter code: Gamma-cadinene synthase (540 aa).

Mg(2+) contacts are provided by D292, D296, D436, S440, and E444. A DDXXD motif motif is present at residues 292-296 (DDTYD).

It belongs to the terpene synthase family. Mg(2+) serves as cofactor. Requires Mn(2+) as cofactor.

It catalyses the reaction (2E,6E)-farnesyl diphosphate = (+)-gamma-cadinene + diphosphate. The protein operates within secondary metabolite biosynthesis; terpenoid biosynthesis. Sesquiterpene synthase that catalyzes the cyclization of trans,trans-farnesyl diphosphate (FPP) to gamma cadinene. The polypeptide is Gamma-cadinene synthase (CDS) (Ocimum basilicum (Sweet basil)).